A 242-amino-acid chain; its full sequence is Biosynthetic peptidoglycan transglycosylase (242 aa).

Residues 19-39 (ILAALAVFWGGGIALFSVVPV) traverse the membrane as a helical segment.

This sequence belongs to the glycosyltransferase 51 family.

The protein localises to the cell inner membrane. It carries out the reaction [GlcNAc-(1-&gt;4)-Mur2Ac(oyl-L-Ala-gamma-D-Glu-L-Lys-D-Ala-D-Ala)](n)-di-trans,octa-cis-undecaprenyl diphosphate + beta-D-GlcNAc-(1-&gt;4)-Mur2Ac(oyl-L-Ala-gamma-D-Glu-L-Lys-D-Ala-D-Ala)-di-trans,octa-cis-undecaprenyl diphosphate = [GlcNAc-(1-&gt;4)-Mur2Ac(oyl-L-Ala-gamma-D-Glu-L-Lys-D-Ala-D-Ala)](n+1)-di-trans,octa-cis-undecaprenyl diphosphate + di-trans,octa-cis-undecaprenyl diphosphate + H(+). Its pathway is cell wall biogenesis; peptidoglycan biosynthesis. Functionally, peptidoglycan polymerase that catalyzes glycan chain elongation from lipid-linked precursors. This Salmonella schwarzengrund (strain CVM19633) protein is Biosynthetic peptidoglycan transglycosylase.